The sequence spans 578 residues: Glucans biosynthesis protein G (578 aa).

The first 37 residues, 1 to 37 (MIVSPCIAPRIPGTRLRKAMLAGVALVGLLSAGQLWA), serve as a signal peptide directing secretion. The interval 511–578 (VPVEAPKPAK…TWSYQLPADE (68 aa)) is disordered. A compositionally biased stretch (basic and acidic residues) spans 517-543 (KPAKDSKQDKAAAKHAHAKAEKAKAEQ). A compositionally biased stretch (low complexity) spans 544 to 554 (PAEQPAADAAS).

This sequence belongs to the OpgD/OpgG family.

The protein localises to the periplasm. It participates in glycan metabolism; osmoregulated periplasmic glucan (OPG) biosynthesis. In terms of biological role, involved in the biosynthesis of osmoregulated periplasmic glucans (OPGs). This chain is Glucans biosynthesis protein G, found in Pseudomonas entomophila (strain L48).